We begin with the raw amino-acid sequence, 347 residues long: MLFREGTRLINSRNWAKLVRPEAVINNMESNTTTYGRFEYEPLERGYGITIGNALRRVLLSSLQGAAFVSVKILGVQHEFTTIPGILEDVTDIILNLKQVRLAMDTDEPQHLSLFVSKKGIVTAADIQTNQHVEVLNPEQHIATLTEDIELRMEFEVRMGKGYVPAEMHEDLHEEIGLIKLDSSFSPIRNVTYVVEQARVGQMTNYDKLVLEVWTDGSVSPEDAIAYSAKIIKDQISVFINFDERISGSGGNEGSGSSDLNDNLFKGIDELELSVRATNCLRSANISTVGELVQKAEADMLKTKNFGKKSLDEIKALLTSMGLDFGMKIDGFEKKYQEWKRKQHHEA.

The segment at 1 to 243 is alpha N-terminal domain (alpha-NTD); that stretch reads MLFREGTRLI…DQISVFINFD (243 aa). Residues 255 to 347 form an alpha C-terminal domain (alpha-CTD) region; that stretch reads SGSSDLNDNL…EWKRKQHHEA (93 aa).

Belongs to the RNA polymerase alpha chain family. In terms of assembly, homodimer. The RNAP catalytic core consists of 2 alpha, 1 beta, 1 beta' and 1 omega subunit. When a sigma factor is associated with the core the holoenzyme is formed, which can initiate transcription.

It carries out the reaction RNA(n) + a ribonucleoside 5'-triphosphate = RNA(n+1) + diphosphate. In terms of biological role, DNA-dependent RNA polymerase catalyzes the transcription of DNA into RNA using the four ribonucleoside triphosphates as substrates. The protein is DNA-directed RNA polymerase subunit alpha of Lawsonia intracellularis (strain PHE/MN1-00).